Reading from the N-terminus, the 265-residue chain is Indole-3-glycerol phosphate synthase (265 aa).

It belongs to the TrpC family.

The catalysed reaction is 1-(2-carboxyphenylamino)-1-deoxy-D-ribulose 5-phosphate + H(+) = (1S,2R)-1-C-(indol-3-yl)glycerol 3-phosphate + CO2 + H2O. The protein operates within amino-acid biosynthesis; L-tryptophan biosynthesis; L-tryptophan from chorismate: step 4/5. In Xanthomonas axonopodis pv. citri (strain 306), this protein is Indole-3-glycerol phosphate synthase.